The sequence spans 231 residues: Putative N-acetylmannosamine-6-phosphate 2-epimerase (231 aa).

This sequence belongs to the NanE family.

The enzyme catalyses an N-acyl-D-glucosamine 6-phosphate = an N-acyl-D-mannosamine 6-phosphate. It participates in amino-sugar metabolism; N-acetylneuraminate degradation; D-fructose 6-phosphate from N-acetylneuraminate: step 3/5. Functionally, converts N-acetylmannosamine-6-phosphate (ManNAc-6-P) to N-acetylglucosamine-6-phosphate (GlcNAc-6-P). The polypeptide is Putative N-acetylmannosamine-6-phosphate 2-epimerase (Latilactobacillus sakei subsp. sakei (strain 23K) (Lactobacillus sakei subsp. sakei)).